Here is a 116-residue protein sequence, read N- to C-terminus: NADPH-dependent 7-cyano-7-deazaguanine reductase (116 aa).

C31 functions as the Thioimide intermediate in the catalytic mechanism. The Proton donor role is filled by D38. Residues 53-55 (VEL) and 72-73 (YE) contribute to the substrate site.

The protein belongs to the GTP cyclohydrolase I family. QueF type 1 subfamily.

It is found in the cytoplasm. The enzyme catalyses 7-aminomethyl-7-carbaguanine + 2 NADP(+) = 7-cyano-7-deazaguanine + 2 NADPH + 3 H(+). It functions in the pathway tRNA modification; tRNA-queuosine biosynthesis. Functionally, catalyzes the NADPH-dependent reduction of 7-cyano-7-deazaguanine (preQ0) to 7-aminomethyl-7-deazaguanine (preQ1). This is NADPH-dependent 7-cyano-7-deazaguanine reductase from Chlorobium chlorochromatii (strain CaD3).